Consider the following 66-residue polypeptide: Large ribosomal subunit protein bL33c (66 aa).

Belongs to the bacterial ribosomal protein bL33 family.

Its subcellular location is the plastid. It is found in the chloroplast. This chain is Large ribosomal subunit protein bL33c, found in Platanus occidentalis (Sycamore).